We begin with the raw amino-acid sequence, 374 residues long: Protein Brevis radix-like 2 (374 aa).

Disordered regions lie at residues 12-43 (NTNN…IKSL) and 57-80 (AYKS…ADSD). Polar residues predominate over residues 65–80 (SGSSNQNKNRSYADSD). The region spanning 143–198 (KEWVAQVEPGVLITFVSLPEGGNDMKRIRFSREMFDKWQAQKWWAENFDKVMELYN) is the BRX 1 domain. A disordered region spans residues 205–316 (QSVPLPTPPR…EELSVSNASD (112 aa)). Composition is skewed to polar residues over residues 246-259 (SSGS…TQTQ) and 267-288 (GLAT…SSVD). Positions 289-307 (ESARSSFSREEEEADHSGE) are enriched in basic and acidic residues. Residues 319 to 374 (TEWVEQDEAGVYITIRALPDGTRELRRVRFSREKFGETNARLWWEQNRARIQQQYL) form the BRX 2 domain.

It belongs to the BRX family. Expressed in roots.

It is found in the nucleus. This Arabidopsis thaliana (Mouse-ear cress) protein is Protein Brevis radix-like 2 (BRXL2).